Here is a 3174-residue protein sequence, read N- to C-terminus: Intermembrane lipid transfer protein VPS13A (3174 aa).

The region spanning 3-116 (FESVVVDVLN…LMEAKQQELK (114 aa)) is the Chorein N-terminal domain. TPR repeat units follow at residues 212–245 (LFAYWNVKSQMFYLSDYDNSLDDLKNGIVNENIV), 373–406 (LTSKKPPGELLVSLEELEKTLDVFNITIARQTAE), and 537–575 (IDSFHITGLPDNSEKPRLLSSLDDAMSLFQITFEINPLD). Ser839 carries the phosphoserine modification. Positions 842–848 (EFFDAPC) match the FFAT motif. TPR repeat units lie at residues 1256-1289 (VIDLITIKLSEMRLYRSRFINDAYQEVLDLLLPL) and 1291-1320 (LEVVVERNLCWEWYQEVPCFNVNAQLKPME). Ser1416 carries the post-translational modification Phosphoserine. A TPR 6 repeat occupies 2009–2041 (YEGDTLLGTASPENEFNIPLGSYRSFIFLKPED). The 246-residue stretch at 2209 to 2454 (VAFHSPYWMV…VFYTWADPVG (246 aa)) folds into the SHR-BD domain. 3 TPR repeats span residues 2568–2601 (PMSVKHTEKLEREFKEYTESSPSEDKVIQLDTNV), 2717–2751 (LGFIYALTDLMTEAEVTENTEVELFHKDIEAFKEE), and 2860–2898 (ILGLDVLGNPFGLIREFSEGVEAFFYEPYQGAIQGPEEF). The required for mitochondrial localization stretch occupies residues 2751–3174 (EYKTASLVDQ…QEAREPSPSL (424 aa)). The interval 2953-3027 (PAGFREGITR…SSTFQGIKRA (75 aa)) is required for lipid droplet localization. Residues 3086 to 3119 (MLMITRRGVLFVTKGTFGQLTCEWQYSFDEFTKE) form a TPR 10 repeat.

This sequence belongs to the VPS13 family. In terms of assembly, interacts (via FFAT motif) with VAPA and VAPB. Interacts with RAB7A. Interacts with XK. In terms of tissue distribution, expressed in red blood cells (at protein level). Widely expressed, with high expression in brain, heart, skeletal muscle and kidney.

The protein localises to the mitochondrion outer membrane. It is found in the endoplasmic reticulum membrane. Its subcellular location is the endosome membrane. The protein resides in the lysosome membrane. It localises to the lipid droplet. The protein localises to the golgi apparatus. It is found in the cytoplasmic vesicle. Its subcellular location is the secretory vesicle. The protein resides in the neuronal dense core vesicle. In terms of biological role, mediates the transfer of lipids between membranes at organelle contact sites. Binds phospholipids. Required for the formation or stabilization of ER-mitochondria contact sites which enable transfer of lipids between the ER and mitochondria. Negatively regulates lipid droplet size and motility. Required for efficient lysosomal protein degradation. This Homo sapiens (Human) protein is Intermembrane lipid transfer protein VPS13A (VPS13A).